The following is a 414-amino-acid chain: Serine/threonine transporter SstT (414 aa).

A run of 9 helical transmembrane segments spans residues 19-39, 55-75, 89-109, 148-168, 189-209, 223-243, 297-317, 323-343, and 363-383; these read IIVG…LEPV, FVKG…IAAI, IVML…LASF, ALAT…GIAL, IVHL…AATL, LLLV…PFIV, IPLG…VLTL, LGIP…AVCA, and LFGI…VIGV.

It belongs to the dicarboxylate/amino acid:cation symporter (DAACS) (TC 2.A.23) family.

It is found in the cell inner membrane. The catalysed reaction is L-serine(in) + Na(+)(in) = L-serine(out) + Na(+)(out). The enzyme catalyses L-threonine(in) + Na(+)(in) = L-threonine(out) + Na(+)(out). Its function is as follows. Involved in the import of serine and threonine into the cell, with the concomitant import of sodium (symport system). The sequence is that of Serine/threonine transporter SstT from Actinobacillus succinogenes (strain ATCC 55618 / DSM 22257 / CCUG 43843 / 130Z).